The chain runs to 26 residues: uncharacterized protein (26 aa).

Residues 3–23 (IIYLILFLIVIYLLYRILDVL) form a helical membrane-spanning segment.

The protein localises to the membrane. This is an uncharacterized protein from Helicobacter pylori (strain J99 / ATCC 700824) (Campylobacter pylori J99).